We begin with the raw amino-acid sequence, 293 residues long: Neugrin (293 aa).

A signal peptide spans 1-15 (MALSLSLFLGGRVRA). 2 disordered regions span residues 25–48 (QGVA…PEER) and 162–211 (PLSA…EKNK). S41 carries the phosphoserine modification. The N-linked (GlcNAc...) asparagine glycan is linked to N270.

Belongs to the neugrin family. As to quaternary structure, forms a regulatory protein-RNA complex, consisting of RCC1L, NGRN, RPUSD3, RPUSD4, TRUB2, FASTKD2 and 16S mt-rRNA. Interacts with 16S mt-rRNA; this interaction is direct.

It localises to the nucleus. The protein localises to the secreted. It is found in the mitochondrion membrane. Its function is as follows. Plays an essential role in mitochondrial ribosome biogenesis. As a component of a functional protein-RNA module, consisting of RCC1L, NGRN, RPUSD3, RPUSD4, TRUB2, FASTKD2 and 16S mitochondrial ribosomal RNA (16S mt-rRNA), controls 16S mt-rRNA abundance and is required for intra-mitochondrial translation of core subunits of the oxidative phosphorylation system. In Rattus norvegicus (Rat), this protein is Neugrin (Ngrn).